The following is a 707-amino-acid chain: Polyribonucleotide nucleotidyltransferase (707 aa).

Mg(2+)-binding residues include Asp486 and Asp492. Residues 553–612 (PRIHTIKINPEKIKDVIGKGGSVIRALTEETGTTIEIEDDGTVKIAATDGDKAKHAIRRI) form the KH domain. One can recognise an S1 motif domain in the interval 622-690 (GRIYQGKVTR…RQGRVRLSIK (69 aa)).

Belongs to the polyribonucleotide nucleotidyltransferase family. In terms of assembly, component of the RNA degradosome, which is a multiprotein complex involved in RNA processing and mRNA degradation. Mg(2+) is required as a cofactor.

The protein resides in the cytoplasm. It carries out the reaction RNA(n+1) + phosphate = RNA(n) + a ribonucleoside 5'-diphosphate. Its function is as follows. Involved in mRNA degradation. Catalyzes the phosphorolysis of single-stranded polyribonucleotides processively in the 3'- to 5'-direction. The chain is Polyribonucleotide nucleotidyltransferase from Edwardsiella ictaluri (strain 93-146).